The sequence spans 105 residues: uncharacterized protein (105 aa).

This sequence belongs to the M.jannaschii MJ0023/MJ0349/MJ1072/MJ1074/MJ1107/MJECL16 family.

This is an uncharacterized protein from Methanocaldococcus jannaschii (strain ATCC 43067 / DSM 2661 / JAL-1 / JCM 10045 / NBRC 100440) (Methanococcus jannaschii).